Consider the following 266-residue polypeptide: Protein STAY-GREEN homolog, chloroplastic (266 aa).

The transit peptide at 1–50 (MGTLTASLVAPSKLNPEKHSSLFVYKTRRKSHKNQSIVPVARLFGPAIFE) directs the protein to the chloroplast.

It belongs to the staygreen family.

The protein localises to the plastid. The protein resides in the chloroplast. Functionally, required to trigger chlorophyll degradation during leaf senescence and fruit ripening. The sequence is that of Protein STAY-GREEN homolog, chloroplastic from Capsicum annuum (Capsicum pepper).